Consider the following 128-residue polypeptide: MRFCLVFIRLAAFVILSGGATSTTTDNDDTRLLQTSNIETAAVANVLHVMQSSESSKRLLRLNDQADISGHDEERSSLIEKGWKKLRKLIKKVWKYVKKPFKKTAKIIKKPFKSRTKNIHIVYYKSRF.

Positions 1–22 (MRFCLVFIRLAAFVILSGGATS) are cleaved as a signal peptide. A RxLR-dEER motif is present at residues 58-75 (RLLRLNDQADISGHDEER).

This sequence belongs to the RxLR effector family.

It is found in the secreted. The protein localises to the host cell membrane. The protein resides in the host nucleus. Functionally, secreted effector that suppresses pattern-triggered immunity (PTI) in plant host. The polypeptide is Secreted RxLR effector protein RXLR-C09 (Plasmopara halstedii (Downy mildew of sunflower)).